A 401-amino-acid chain; its full sequence is Formate-dependent phosphoribosylglycinamide formyltransferase (401 aa).

N(1)-(5-phospho-beta-D-ribosyl)glycinamide-binding positions include 22–23 (EL) and E82. ATP-binding positions include R115, K157, 162-167 (SSGKGQ), 197-200 (EGFV), and E205. The ATP-grasp domain occupies 120 to 315 (RLAAETLALP…EFELHARAIL (196 aa)). Mg(2+) is bound by residues E274 and E286. N(1)-(5-phospho-beta-D-ribosyl)glycinamide-binding positions include D293, K362, and 369-370 (RR).

It belongs to the PurK/PurT family. As to quaternary structure, homodimer.

The catalysed reaction is N(1)-(5-phospho-beta-D-ribosyl)glycinamide + formate + ATP = N(2)-formyl-N(1)-(5-phospho-beta-D-ribosyl)glycinamide + ADP + phosphate + H(+). It functions in the pathway purine metabolism; IMP biosynthesis via de novo pathway; N(2)-formyl-N(1)-(5-phospho-D-ribosyl)glycinamide from N(1)-(5-phospho-D-ribosyl)glycinamide (formate route): step 1/1. Its function is as follows. Involved in the de novo purine biosynthesis. Catalyzes the transfer of formate to 5-phospho-ribosyl-glycinamide (GAR), producing 5-phospho-ribosyl-N-formylglycinamide (FGAR). Formate is provided by PurU via hydrolysis of 10-formyl-tetrahydrofolate. This Polaromonas naphthalenivorans (strain CJ2) protein is Formate-dependent phosphoribosylglycinamide formyltransferase.